Consider the following 189-residue polypeptide: UPF0301 protein PSPA7_0505 (189 aa).

This sequence belongs to the UPF0301 (AlgH) family.

This chain is UPF0301 protein PSPA7_0505, found in Pseudomonas paraeruginosa (strain DSM 24068 / PA7) (Pseudomonas aeruginosa (strain PA7)).